Reading from the N-terminus, the 244-residue chain is MLKDEVIKQISTPLTSPAFPRGPYKFHNREYFNIVYRTDMDALRKVVPEPLEIDEPLVRFEIMAMHDTSGLGCYTESGQAIPVSFNGVKGDYLHMMYLDNEPAIAVGRELSAYPKKLGYPKLFVDSDTLVGTLDYGKLRVATATMGYKHKALDANEAKDQICRPNYMLKIIPNYDGSPRICELINAKITDVTVHEAWTGPTRLQLFDHAMAPLNDLPVKEIVSSSHILADIILPRAEVIYDYLK.

Residue Lys-115 is the Schiff-base intermediate with acetoacetate of the active site.

Belongs to the ADC family. Homododecamer.

It catalyses the reaction acetoacetate + H(+) = acetone + CO2. Its function is as follows. Catalyzes the conversion of acetoacetate to acetone and carbon dioxide. The protein is Acetoacetate decarboxylase of Clostridium acetobutylicum (strain ATCC 824 / DSM 792 / JCM 1419 / IAM 19013 / LMG 5710 / NBRC 13948 / NRRL B-527 / VKM B-1787 / 2291 / W).